A 200-amino-acid polypeptide reads, in one-letter code: V-type proton ATPase subunit E (200 aa).

This sequence belongs to the V-ATPase E subunit family.

Produces ATP from ADP in the presence of a proton gradient across the membrane. The polypeptide is V-type proton ATPase subunit E (Thermoanaerobacter pseudethanolicus (strain ATCC 33223 / 39E) (Clostridium thermohydrosulfuricum)).